Here is a 189-residue protein sequence, read N- to C-terminus: GMP synthase [glutamine-hydrolyzing] subunit A (189 aa).

A Glutamine amidotransferase type-1 domain is found at 1 to 189 (MIVILNNGGQ…CKKCGFEFEE (189 aa)). Cysteine 76 serves as the catalytic Nucleophile. Catalysis depends on residues histidine 163 and glutamate 165.

In terms of assembly, heterodimer composed of a glutamine amidotransferase subunit (A) and a GMP-binding subunit (B).

The enzyme catalyses XMP + L-glutamine + ATP + H2O = GMP + L-glutamate + AMP + diphosphate + 2 H(+). It functions in the pathway purine metabolism; GMP biosynthesis; GMP from XMP (L-Gln route): step 1/1. In terms of biological role, catalyzes the synthesis of GMP from XMP. The polypeptide is GMP synthase [glutamine-hydrolyzing] subunit A (Methanococcus maripaludis (strain C7 / ATCC BAA-1331)).